Reading from the N-terminus, the 336-residue chain is Probable allantoicase 2 (336 aa).

This sequence belongs to the allantoicase family.

The catalysed reaction is allantoate + H2O = (S)-ureidoglycolate + urea. It participates in nitrogen metabolism; (S)-allantoin degradation; (S)-ureidoglycolate from allantoate (aminidohydrolase route): step 1/1. The polypeptide is Probable allantoicase 2 (Burkholderia pseudomallei (strain K96243)).